We begin with the raw amino-acid sequence, 85 residues long: Phosphoribosyl-AMP cyclohydrolase (85 aa).

Asp-48 provides a ligand contact to Mg(2+). Residue Cys-49 coordinates Zn(2+). Mg(2+)-binding residues include Asp-50 and Asp-52. Positions 65 and 72 each coordinate Zn(2+).

It belongs to the PRA-CH family. Homodimer. Requires Mg(2+) as cofactor. The cofactor is Zn(2+).

It is found in the cytoplasm. The enzyme catalyses 1-(5-phospho-beta-D-ribosyl)-5'-AMP + H2O = 1-(5-phospho-beta-D-ribosyl)-5-[(5-phospho-beta-D-ribosylamino)methylideneamino]imidazole-4-carboxamide. It functions in the pathway amino-acid biosynthesis; L-histidine biosynthesis; L-histidine from 5-phospho-alpha-D-ribose 1-diphosphate: step 3/9. In terms of biological role, catalyzes the hydrolysis of the adenine ring of phosphoribosyl-AMP. The protein is Phosphoribosyl-AMP cyclohydrolase (hisI) of Saccharolobus solfataricus (strain ATCC 35092 / DSM 1617 / JCM 11322 / P2) (Sulfolobus solfataricus).